A 625-amino-acid chain; its full sequence is BTB/POZ domain-containing protein At5g48130 (625 aa).

The 65-residue stretch at 41–105 (ASVHVRVCNK…IYGCPTLIHP (65 aa)) folds into the BTB domain. An NPH3 domain is found at 217 to 469 (DTWIKDLTDL…VQALFIQQLN (253 aa)). Over residues 494 to 507 (VPSSRPLTSQQSPC) the composition is skewed to polar residues. A disordered region spans residues 494–513 (VPSSRPLTSQQSPCTDDETG).

This sequence belongs to the NPH3 family.

It functions in the pathway protein modification; protein ubiquitination. Its function is as follows. May act as a substrate-specific adapter of an E3 ubiquitin-protein ligase complex (CUL3-RBX1-BTB) which mediates the ubiquitination and subsequent proteasomal degradation of target proteins. The chain is BTB/POZ domain-containing protein At5g48130 from Arabidopsis thaliana (Mouse-ear cress).